The following is a 118-amino-acid chain: Large ribosomal subunit protein bL19 (118 aa).

The protein belongs to the bacterial ribosomal protein bL19 family.

In terms of biological role, this protein is located at the 30S-50S ribosomal subunit interface and may play a role in the structure and function of the aminoacyl-tRNA binding site. This Geobacter metallireducens (strain ATCC 53774 / DSM 7210 / GS-15) protein is Large ribosomal subunit protein bL19.